A 385-amino-acid polypeptide reads, in one-letter code: Podocin (385 aa).

Basic and acidic residues predominate over residues 1 to 27 (MDSRARSSSREAHGRSSRSSSRDDKKA). The disordered stretch occupies residues 1–64 (MDSRARSSSR…GEPRAPAATA (64 aa)). Residues 1-104 (MDSRARSSSR…IKPSGLGACE (104 aa)) are Cytoplasmic-facing. The S-palmitoyl cysteine moiety is linked to residue Cys103. The helical transmembrane segment at 105-125 (WLLVLASLIFIIMTFPFSIWF) threads the bilayer. Over 126–385 (CIKVVQEYER…NPKKKDSPML (260 aa)) the chain is Extracellular. Over residues 357–370 (NRAQGSINYPSSSK) the composition is skewed to polar residues. Residues 357 to 385 (NRAQGSINYPSSSKPVEPLNPKKKDSPML) form a disordered region. The segment covering 376-385 (NPKKKDSPML) has biased composition (basic and acidic residues).

The protein belongs to the band 7/mec-2 family. In terms of assembly, interacts with nephrin/NPHS1, KIRRL1 and CD2AP. Interacts with DDN.

Its subcellular location is the membrane. Its function is as follows. Plays a role in the regulation of glomerular permeability, acting probably as a linker between the plasma membrane and the cytoskeleton. The polypeptide is Podocin (Nphs2) (Mus musculus (Mouse)).